The chain runs to 311 residues: Thioredoxin reductase (311 aa).

33–43 (EGFFSGISGGQ) is an FAD binding site. Cysteine 138 and cysteine 141 are disulfide-bonded. 283 to 292 (DVQDKYYRQA) contributes to the FAD binding site.

It belongs to the class-II pyridine nucleotide-disulfide oxidoreductase family. As to quaternary structure, homodimer. FAD is required as a cofactor.

The protein resides in the cytoplasm. It carries out the reaction [thioredoxin]-dithiol + NADP(+) = [thioredoxin]-disulfide + NADPH + H(+). This is Thioredoxin reductase (trxB) from Chlamydia pneumoniae (Chlamydophila pneumoniae).